A 265-amino-acid polypeptide reads, in one-letter code: Anamorsin homolog 1 (265 aa).

The N-terminal SAM-like domain stretch occupies residues 1 to 143 (MAATAAAALA…KASWSMGSSF (143 aa)). The linker stretch occupies residues 144–175 (PLKKATKGLPKIQIDDDSELIDEDSLLTEDDL). [2Fe-2S] cluster contacts are provided by cysteine 186, cysteine 195, cysteine 198, and cysteine 200. Positions 186-200 (CEVGATRKACKNCTC) are fe-S binding site A. [4Fe-4S] cluster is bound by residues cysteine 226, cysteine 229, cysteine 237, and cysteine 240. 2 consecutive short sequence motifs (cx2C motif) follow at residues 226–229 (CGNC) and 237–240 (CGTC). The fe-S binding site B stretch occupies residues 226-240 (CGNCGLGDAFRCGTC).

This sequence belongs to the anamorsin family. Monomer. Requires [2Fe-2S] cluster as cofactor. It depends on [4Fe-4S] cluster as a cofactor.

Its subcellular location is the cytoplasm. It is found in the mitochondrion intermembrane space. Its function is as follows. Component of the cytosolic iron-sulfur (Fe-S) protein assembly (CIA) machinery. Required for the maturation of extramitochondrial Fe-S proteins. Part of an electron transfer chain functioning in an early step of cytosolic Fe-S biogenesis, facilitating the de novo assembly of a [4Fe-4S] cluster on the cytosolic Fe-S scaffold complex. Electrons are transferred from NADPH via a FAD- and FMN-containing diflavin oxidoreductase. Together with the diflavin oxidoreductase, also required for the assembly of the diferric tyrosyl radical cofactor of ribonucleotide reductase (RNR), probably by providing electrons for reduction during radical cofactor maturation in the catalytic small subunit. The polypeptide is Anamorsin homolog 1 (Oryza sativa subsp. indica (Rice)).